The chain runs to 229 residues: Potassium/proton antiporter CemA (229 aa).

4 helical membrane-spanning segments follow: residues 7-27, 106-126, 154-174, and 189-209; these read LASLPYLVSIIFLPWWVSLSF, IILHFSTNLICFAILSGYFFL, ILLVTDLWIGFHSTHGWELMI, and IISGLVSTFPVILDTIVKYWI.

This sequence belongs to the CemA family.

It is found in the plastid. The protein resides in the chloroplast inner membrane. It carries out the reaction K(+)(in) + H(+)(out) = K(+)(out) + H(+)(in). Contributes to K(+)/H(+) antiport activity by supporting proton efflux to control proton extrusion and homeostasis in chloroplasts in a light-dependent manner to modulate photosynthesis. Prevents excessive induction of non-photochemical quenching (NPQ) under continuous-light conditions. Indirectly promotes efficient inorganic carbon uptake into chloroplasts. The protein is Potassium/proton antiporter CemA of Phalaenopsis aphrodite subsp. formosana (Moth orchid).